The following is a 240-amino-acid chain: Manganese transport system ATP-binding protein MntB (240 aa).

In terms of domain architecture, ABC transporter spans 1 to 233 (MEIQGLTIAY…KIQFAYGDAP (233 aa)). 33–40 (GPNGAGKS) lines the ATP pocket.

It belongs to the ABC transporter superfamily.

It localises to the cell membrane. In terms of biological role, this protein is probably a component of a manganese permease, a binding protein-dependent, ATP-driven transport system. Probably responsible for energy coupling to the transport system. The chain is Manganese transport system ATP-binding protein MntB (mntB) from Listeria monocytogenes serovar 1/2a (strain ATCC BAA-679 / EGD-e).